A 172-amino-acid chain; its full sequence is MILNMTINYIKKDRYKVLNLVLITISIIALSTAYIAEYIFHYTPCPLCVYERFPYLMLIKISLTALIIRQLNKYTLILILITILSSCILSTYHSFVERGIVQPSAICSSMIRIPQGLSIQHIKQMFYSQPITSCTKPAIKILGISMTEYNLLLNICLLIFLGLILFYPKSNK.

4 consecutive transmembrane segments (helical) span residues 20–40, 48–68, 76–96, and 146–166; these read LVLITISIIALSTAYIAEYIF, CVYERFPYLMLIKISLTALII, LILILITILSSCILSTYHSFV, and MTEYNLLLNICLLIFLGLILF.

It localises to the cell membrane. This is an uncharacterized protein from Rickettsia prowazekii (strain Madrid E).